A 126-amino-acid chain; its full sequence is SGSCTVKTCWMRLPTFRTVGDFLKDRFDGASRVIYGNKGSNRASRMELHHLEPENPAHKPPSPHDLVYFEKSPNFCTYSGKTGTAGTAGRFCNSTSPALDGCELLCCGRGYRTRTQRVTERCNCTF.

Ser1 carries the O-palmitoleoyl serine; by PORCN lipid modification. Cys92 and Cys107 are joined by a disulfide. Residues Asn93 and Asn123 are each glycosylated (N-linked (GlcNAc...) asparagine).

Belongs to the Wnt family. Post-translationally, palmitoleoylation is required for efficient binding to frizzled receptors. Palmitoleoylation is necessary for proper trafficking to cell surface. Depalmitoleoylated by NOTUM, leading to inhibit Wnt signaling pathway.

It is found in the secreted. It localises to the extracellular space. The protein resides in the extracellular matrix. Functionally, ligand for members of the frizzled family of seven transmembrane receptors. Acts in the canonical Wnt signaling pathway by promoting beta-catenin-dependent transcriptional activation. Plays an essential role in the development of the embryonic brain and central nervous system (CNS). Has a role in osteoblast function, bone development and bone homeostasis. This chain is Protein Wnt-1 (WNT-1), found in Pituophis melanoleucus (Pine snake).